The chain runs to 126 residues: MNLRATRVGEQMKKELSDIIGRKLKDPRIGFVTVTDVRVTGDLQQAKVYISVLGDEEQRQNTLKGLEKAKGFIRSEIGQRIRLRKTPEIFFEIDESIEYGNRIEQLIRQISTEHEGGKKEEENKEE.

Belongs to the RbfA family. Monomer. Binds 30S ribosomal subunits, but not 50S ribosomal subunits or 70S ribosomes.

Its subcellular location is the cytoplasm. One of several proteins that assist in the late maturation steps of the functional core of the 30S ribosomal subunit. Associates with free 30S ribosomal subunits (but not with 30S subunits that are part of 70S ribosomes or polysomes). Required for efficient processing of 16S rRNA. May interact with the 5'-terminal helix region of 16S rRNA. This chain is Ribosome-binding factor A, found in Geobacillus sp. (strain WCH70).